The primary structure comprises 242 residues: UPF0246 protein SPN23F15130 (242 aa).

It belongs to the UPF0246 family.

The protein is UPF0246 protein SPN23F15130 of Streptococcus pneumoniae (strain ATCC 700669 / Spain 23F-1).